Here is a 348-residue protein sequence, read N- to C-terminus: MAMVVPKEGLVVMDKESVSSASSDSHLRLQPHFPDFTIPVKDFFKSREAREFLSGALAGAMTKAVLAPLETIRTRMIVGVGSRSIPGSFLEVVQKQGWQGLWAGNEINMIRIIPTQAIELGTFEWVKRAMTSAQVKLKKIEDAKIEIGDFSFSPSISWISPVAVAGASAGIASTLVCHPLEVLKDRLTVSPEIYPSLSLAIPRIFRADGIRGFYAGLGPTLVGMLPYSTCYYFMYDKMKTSYCKSKNKKALSRPEMLVLGALAGLTASTISFPLEVARKRLMVGALKGECPPNMAAAIAEVVKKEGVMGLYRGWGASCLKVMPSSGITWVFYEAWKDILLAANTKPLI.

Solcar repeat units follow at residues 46–129 (SREA…VKRA), 157–241 (SWIS…MKTS), and 251–338 (LSRP…WKDI). 6 consecutive transmembrane segments (helical) span residues 52–72 (FLSG…LETI), 104–124 (GNEI…GTFE), 156–176 (ISWI…STLV), 213–233 (FYAG…CYYF), 256–276 (MLVL…PLEV), and 321–341 (VMPS…ILLA).

It belongs to the mitochondrial carrier (TC 2.A.29) family.

It is found in the mitochondrion inner membrane. Probable mitochondrial adenylate carrier that catalyzes the transport of ATP, ADP and AMP. The chain is Probable mitochondrial adenine nucleotide transporter BTL1 from Arabidopsis thaliana (Mouse-ear cress).